A 2274-amino-acid chain; its full sequence is Adenomatous polyposis coli protein 2 (2274 aa).

Residues 5-59 (MASYEQLVRQVEALKAENTHLRQELRDNSSHLSKLETETSGMKEVLKHLQGKLEQ) are a coiled coil. Disordered regions lie at residues 97-120 (GPEP…KDSF) and 248-269 (VEEE…QPGN). 6 ARM repeats span residues 301-341 (PESC…GAKD), 472-511 (ANKA…NLSW), 515-555 (INSK…NLSA), 557-602 (STEN…NVSS), 608-647 (EDYR…NLSA), and 650-689 (PRDQ…NLLA). Residues 832-856 (AAKAKAKLALAVARIDRLVEDISAL) are a coiled coil. Disordered regions lie at residues 859–901 (SSDD…GSRA), 1061–1143 (CSSL…NCVQ), and 1165–1216 (SIAS…TSQF). Residues 861 to 870 (DDSFSLSSGD) show a composition bias toward low complexity. Repeat 1 spans residues 1049–1068 (LVAQDGPMSLSRCSSLSSLS). Residues 1049 to 1565 (LVAQDGPMSL…SLTSSASSLS (517 aa)) form a 5 X 20 AA approximate repeat of F-X-V-E-X-T-P-X-C-F-S-R-X-S-S-L-S-S-L-S region. The tract at residues 1049-1565 (LVAQDGPMSL…SLTSSASSLS (517 aa)) is interaction with CTNNB1. The segment covering 1077–1086 (QAENLDSDSS) has biased composition (polar residues). Over residues 1092 to 1103 (EAGPGEAELGRA) the composition is skewed to low complexity. A compositionally biased stretch (polar residues) spans 1133–1143 (TPSSSSENCVQ). Residues 1140–1159 (NCVQETPLVLSRCSSVSSLG) form repeat 2. Residues 1250-1269 (FTVEKPDENFSCASSLSALA) form repeat 3. Disordered stretches follow at residues 1290–1323 (ERAV…SATD), 1368–1480 (RGDD…LQSL), 1493–1631 (FYDS…DIRP), 1699–2003 (STLQ…RGRP), 2022–2122 (PRQP…IKDE), and 2135–2274 (TALP…SLLE). Over residues 1374–1397 (TDSAEGTPVNFSSAASLSDETLQG) the composition is skewed to polar residues. Repeat 4 spans residues 1375–1394 (DSAEGTPVNFSSAASLSDET). Basic and acidic residues predominate over residues 1399 to 1411 (SRDKPAGPGDRQK). Residues 1455–1470 (RPQSARSNRDSSCQTR) are compositionally biased toward polar residues. The span at 1517-1529 (LKREKPAGRKETP) shows a compositional bias: basic and acidic residues. Repeat 5 spans residues 1546-1565 (LIVDETPPCYSLTSSASSLS). The span at 1556 to 1574 (SLTSSASSLSEPEAPEQPA) shows a compositional bias: low complexity. Ser-1563 and Ser-1565 each carry phosphoserine. A compositionally biased stretch (basic residues) spans 1608-1624 (PRRRTQVPGSRRRKPRA). Composition is skewed to low complexity over residues 1780 to 1795 (SGPC…SGTT) and 1839 to 1868 (LAKT…TPTG). A required for localization to microtubules and function in microtubule stabilization region spans residues 1792–1871 (SGTTQPETVT…PLATPTGGPL (80 aa)). Residue Ser-1861 is modified to Phosphoserine. Residues 1910–1921 (RVPPPLARPSPE) show a composition bias toward pro residues. 2 stretches are compositionally biased toward low complexity: residues 1945 to 1955 (RMASARSSGSE) and 1983 to 1997 (LSSA…QAAS). The interaction with MAPRE1 and MAPRE3 stretch occupies residues 2037–2114 (GLAPLAPRRT…PLPRVAPPGT (78 aa)). The span at 2165–2179 (DVATSKTNSSTSPSL) shows a compositional bias: polar residues.

The protein belongs to the adenomatous polyposis coli (APC) family. As to quaternary structure, interacts with PSRC1. Interacts with MAPRE3. Interacts with APC, CTNNB1, TP53BP2, MAPRE1 and possibly with AXIN2. Expressed in brain and other neural tissues.

The protein localises to the cytoplasm. The protein resides in the cytoskeleton. It is found in the golgi apparatus. Its subcellular location is the perinuclear region. Its function is as follows. Stabilizes microtubules and may regulate actin fiber dynamics through the activation of Rho family GTPases. May also function in Wnt signaling by promoting the rapid degradation of CTNNB1. In Mus musculus (Mouse), this protein is Adenomatous polyposis coli protein 2 (Apc2).